Consider the following 564-residue polypeptide: Arrestin domain-containing protein E (564 aa).

Over residues 74–146 the composition is skewed to low complexity; it reads SQQPQSSQPS…NTSNGFSPPN (73 aa). 2 disordered regions span residues 74–150 and 245–286; these read SQQP…LNKN and ASQP…SFPS. A compositionally biased stretch (pro residues) spans 250–259; that stretch reads PQQPQQPQPQ. Residues 260 to 269 are compositionally biased toward low complexity; sequence QPQQQQFQQQ. Residues 270 to 285 show a composition bias toward polar residues; that stretch reads SYNNNNSTQSMLSSFP. The LIM zinc-binding domain occupies 348-413; the sequence is DKCAACDALL…PMCFESTTGL (66 aa).

This is Arrestin domain-containing protein E (adcE) from Dictyostelium discoideum (Social amoeba).